The primary structure comprises 319 residues: Lipoyl synthase (319 aa).

[4Fe-4S] cluster is bound by residues Cys-66, Cys-71, Cys-77, Cys-92, Cys-96, Cys-99, and Ser-305. In terms of domain architecture, Radical SAM core spans 78 to 294; that stretch reads FNRGTATFMI…KKEALSIGFT (217 aa).

Belongs to the radical SAM superfamily. Lipoyl synthase family. It depends on [4Fe-4S] cluster as a cofactor.

The protein resides in the cytoplasm. The catalysed reaction is [[Fe-S] cluster scaffold protein carrying a second [4Fe-4S](2+) cluster] + N(6)-octanoyl-L-lysyl-[protein] + 2 oxidized [2Fe-2S]-[ferredoxin] + 2 S-adenosyl-L-methionine + 4 H(+) = [[Fe-S] cluster scaffold protein] + N(6)-[(R)-dihydrolipoyl]-L-lysyl-[protein] + 4 Fe(3+) + 2 hydrogen sulfide + 2 5'-deoxyadenosine + 2 L-methionine + 2 reduced [2Fe-2S]-[ferredoxin]. It functions in the pathway protein modification; protein lipoylation via endogenous pathway; protein N(6)-(lipoyl)lysine from octanoyl-[acyl-carrier-protein]: step 2/2. Functionally, catalyzes the radical-mediated insertion of two sulfur atoms into the C-6 and C-8 positions of the octanoyl moiety bound to the lipoyl domains of lipoate-dependent enzymes, thereby converting the octanoylated domains into lipoylated derivatives. The protein is Lipoyl synthase of Buchnera aphidicola subsp. Schizaphis graminum (strain Sg).